Here is an 846-residue protein sequence, read N- to C-terminus: ATR-interacting protein mus304 (846 aa).

3 disordered regions span residues 20–40, 90–109, and 135–162; these read DVSV…FDGI, QGST…QKKP, and EPQK…KTTT. Residues 144–162 show a composition bias toward low complexity; that stretch reads TSTSRITTSSISVQQKTTT. Coiled coils occupy residues 168-240 and 327-359; these read ATQS…LADE and EYSE…LQAK. The EEXXXDL motif signature appears at 504-510; it reads EELLFDL. The segment at 651–681 is disordered; it reads GAVQGSVSNGSTSASVSNPNQNSNSSTTQRG. Residues 655–676 show a composition bias toward low complexity; it reads GSVSNGSTSASVSNPNQNSNSS.

Belongs to the ATRIP family. In terms of assembly, interacts with ATR/mei-41. Highly expressed in the oocyte and nurse cells from stage 5 onward and in embryos prior to during nuclear division 14. Then, it decreases to background levels during interphase 14. Weakly or not expressed in stage embryos and imaginal disks.

It is found in the cytoplasm. In terms of biological role, DNA damage checkpoint protein required for chromosome break repair and for genomic stability during development. In Drosophila melanogaster (Fruit fly), this protein is ATR-interacting protein mus304 (mus304).